The chain runs to 248 residues: Probable phosphatase Sfri_3709 (248 aa).

Zn(2+) is bound by residues H8, H10, H16, H41, E74, H102, H132, D193, and H195.

It belongs to the PHP family. The cofactor is Zn(2+).

This chain is Probable phosphatase Sfri_3709, found in Shewanella frigidimarina (strain NCIMB 400).